Consider the following 99-residue polypeptide: Malonate decarboxylase acyl carrier protein (99 aa).

S25 carries the O-(phosphoribosyl dephospho-coenzyme A)serine modification.

Belongs to the MdcC family. Covalently binds the prosthetic group of malonate decarboxylase.

It is found in the cytoplasm. Its function is as follows. Subunit of malonate decarboxylase, it is an acyl carrier protein to which acetyl and malonyl thioester residues are bound via a 2'-(5''-phosphoribosyl)-3'-dephospho-CoA prosthetic group and turn over during the catalytic mechanism. The sequence is that of Malonate decarboxylase acyl carrier protein from Pseudomonas putida (Arthrobacter siderocapsulatus).